Reading from the N-terminus, the 144-residue chain is Universal stress protein F (144 aa).

Belongs to the universal stress protein A family. Homodimer.

The chain is Universal stress protein F (uspF) from Escherichia coli O157:H7.